We begin with the raw amino-acid sequence, 237 residues long: 1-(5-phosphoribosyl)-5-[(5-phosphoribosylamino)methylideneamino] imidazole-4-carboxamide isomerase (237 aa).

Asp-8 serves as the catalytic Proton acceptor. The active-site Proton donor is Asp-130.

The protein belongs to the HisA/HisF family.

It localises to the cytoplasm. It catalyses the reaction 1-(5-phospho-beta-D-ribosyl)-5-[(5-phospho-beta-D-ribosylamino)methylideneamino]imidazole-4-carboxamide = 5-[(5-phospho-1-deoxy-D-ribulos-1-ylimino)methylamino]-1-(5-phospho-beta-D-ribosyl)imidazole-4-carboxamide. Its pathway is amino-acid biosynthesis; L-histidine biosynthesis; L-histidine from 5-phospho-alpha-D-ribose 1-diphosphate: step 4/9. This chain is 1-(5-phosphoribosyl)-5-[(5-phosphoribosylamino)methylideneamino] imidazole-4-carboxamide isomerase, found in Caldicellulosiruptor bescii (strain ATCC BAA-1888 / DSM 6725 / KCTC 15123 / Z-1320) (Anaerocellum thermophilum).